The primary structure comprises 382 residues: Chorismate synthase (382 aa).

Positions 39 and 45 each coordinate NADP(+). Residues 128-130 (RAS), 246-247 (QA), alanine 290, 305-309 (KPIAT), and arginine 331 contribute to the FMN site.

It belongs to the chorismate synthase family. In terms of assembly, homotetramer. FMNH2 is required as a cofactor.

The catalysed reaction is 5-O-(1-carboxyvinyl)-3-phosphoshikimate = chorismate + phosphate. It functions in the pathway metabolic intermediate biosynthesis; chorismate biosynthesis; chorismate from D-erythrose 4-phosphate and phosphoenolpyruvate: step 7/7. Functionally, catalyzes the anti-1,4-elimination of the C-3 phosphate and the C-6 proR hydrogen from 5-enolpyruvylshikimate-3-phosphate (EPSP) to yield chorismate, which is the branch point compound that serves as the starting substrate for the three terminal pathways of aromatic amino acid biosynthesis. This reaction introduces a second double bond into the aromatic ring system. The chain is Chorismate synthase from Deinococcus geothermalis (strain DSM 11300 / CIP 105573 / AG-3a).